Reading from the N-terminus, the 112-residue chain is C-type natriuretic peptide 3 (112 aa).

A signal peptide spans Met1–Ala19. The propeptide occupies Arg20 to Lys90. Residues Gln33 to Glu67 are disordered. Residues Glu40 to Pro54 are compositionally biased toward basic and acidic residues. A disulfide bridge connects residues Cys96 and Cys112.

The protein belongs to the natriuretic peptide family. Spinal cord, kidney, ovary, heart and spleen, and to a lower extent in brain and liver.

The protein resides in the secreted. Functionally, exhibits natriuretic and vasodepressant activity. Has cGMP-stimulating activity. May help to regulate body fluid homeostasis in a variety of aquatic environments. The polypeptide is C-type natriuretic peptide 3 (Oryzias latipes (Japanese rice fish)).